A 778-amino-acid chain; its full sequence is Phenylalanine--tRNA ligase beta subunit (778 aa).

A tRNA-binding domain is found at 39–150 (YEVPQKIVFG…GKYKIGEEVS (112 aa)). One can recognise a B5 domain in the interval 391-467 (HEDKIISLNK…RLVGIDNIPS (77 aa)). Mg(2+) is bound by residues D445, D451, E454, and E455. The region spanning 686–778 (SKYQASFRDL…LKNQLGVGIR (93 aa)) is the FDX-ACB domain.

The protein belongs to the phenylalanyl-tRNA synthetase beta subunit family. Type 1 subfamily. Tetramer of two alpha and two beta subunits. Mg(2+) is required as a cofactor.

The protein localises to the cytoplasm. The catalysed reaction is tRNA(Phe) + L-phenylalanine + ATP = L-phenylalanyl-tRNA(Phe) + AMP + diphosphate + H(+). The protein is Phenylalanine--tRNA ligase beta subunit of Sulfurimonas denitrificans (strain ATCC 33889 / DSM 1251) (Thiomicrospira denitrificans (strain ATCC 33889 / DSM 1251)).